The primary structure comprises 41 residues: Pi-stichotoxin-Hcr5c (41 aa).

Cystine bridges form between Cys4–Cys37, Cys6–Cys30, and Cys20–Cys38.

This sequence belongs to the sea anemone type 3 (BDS) potassium channel toxin family.

Its subcellular location is the secreted. The protein localises to the nematocyst. In terms of biological role, weakly and reversibly inhibits rat homomeric ASIC1 (isoform ASIC1a) (IC(50)=4.95 uM), and ASIC3 (IC(50)=17 uM). ASIC1a current inhibition and ASIC3 transient current inhibition are not complete, and reach a maximum of 70% inhibition and 80%, respectively. The chain is Pi-stichotoxin-Hcr5c from Radianthus crispa (Leathery sea anemone).